The following is a 419-amino-acid chain: Octopressin receptor (419 aa).

Residues 1–37 (MENFTEENLHPWITTTTRVYNNVTIFPQYDDELGKFE) are Extracellular-facing. 2 N-linked (GlcNAc...) asparagine glycosylation sites follow: Asn-3 and Asn-22. A helical transmembrane segment spans residues 38 to 58 (IMVLCILCFMALFGNAVVLIV). Residues 59–80 (LRIKKTTLTRMQLLIVYLSVTD) are Cytoplasmic-facing. A helical transmembrane segment spans residues 81 to 101 (ISVALFHILPTIILKINVYFL). Residues 102-108 (GDISACR) lie on the Extracellular side of the membrane. Cys-107 and Cys-182 are joined by a disulfide. The helical transmembrane segment at 109-129 (VYQFITVAELYASSFVLIVTA) threads the bilayer. Residues 130–153 (LDRYISICHPLAAHMWTNRRVHMT) are Cytoplasmic-facing. A helical transmembrane segment spans residues 154 to 174 (TALALFLALMCSLPQLDAVLV). Over 175–192 (DFHGGKLCRPNLTTELAN) the chain is Extracellular. An N-linked (GlcNAc...) asparagine glycan is attached at Asn-185. The chain crosses the membrane as a helical span at residues 193-213 (IAYSWWAFCSVFFVPLLLLIF). The Cytoplasmic segment spans residues 214-292 (FYGRICFVVW…VSKSKIKTIK (79 aa)). The tract at residues 253–274 (SQTSSENRVKNYSDARDKDSSR) is disordered. Basic and acidic residues predominate over residues 259–274 (NRVKNYSDARDKDSSR). A helical membrane pass occupies residues 293 to 313 (LTFSVVACFIICYTPFFTVLM). The Extracellular portion of the chain corresponds to 314–329 (ARTYDAELSSAQTPAL). Residues 330–350 (VILSLLPSLNSCTNPWIYLAF) form a helical membrane-spanning segment. At 351 to 419 (SGKVWCRQQS…TTALMSSSPC (69 aa)) the chain is on the cytoplasmic side.

It belongs to the G-protein coupled receptor 1 family. Vasopressin/oxytocin receptor subfamily. Present in the nervous system and peripheral tissues.

Its subcellular location is the cell membrane. Functionally, acts as a receptor for octopressin. The sequence is that of Octopressin receptor from Octopus vulgaris (Common octopus).